Consider the following 122-residue polypeptide: Large ribosomal subunit protein uL14c (122 aa).

This sequence belongs to the universal ribosomal protein uL14 family. As to quaternary structure, part of the 50S ribosomal subunit.

It is found in the plastid. The protein localises to the chloroplast. Binds to 23S rRNA. In Chlorella vulgaris (Green alga), this protein is Large ribosomal subunit protein uL14c.